We begin with the raw amino-acid sequence, 192 residues long: MAPKPGAEWSTALSHLVLGVVSLHAAVSTAEASRGAAAGFLLQVLAATTTLAPGLSTHEDCLAGAWVATVIGLPLLAFDFHWVNGDRSSANLLLGGGMVLAVAGGHLGPEGRSVAGQAMLLVVAVTILIVAVFTANTYGMWGGAMLGVAGLLSRLEEDRLLLLPKEDVCRWALAVGSWAYCRALHTQRLQWE.

The N-terminal stretch at 1–32 (MAPKPGAEWSTALSHLVLGVVSLHAAVSTAEA) is a signal peptide. Helical transmembrane passes span 35 to 55 (GAAA…APGL), 63 to 83 (AGAW…FHWV), 89 to 109 (SANL…HLGP), and 114 to 134 (VAGQ…AVFT).

It localises to the membrane. This chain is Transmembrane protein 276, found in Homo sapiens (Human).